The sequence spans 297 residues: Phosphatidylglycerol--prolipoprotein diacylglyceryl transferase (297 aa).

A run of 4 helical transmembrane segments spans residues 20-40 (FITI…GLFI), 57-77 (EILP…YVIF), 107-127 (WEGG…IIFF), and 133-153 (IHLK…QSIG). Position 154 (Arg154) interacts with a 1,2-diacyl-sn-glycero-3-phospho-(1'-sn-glycerol). 3 helical membrane-spanning segments follow: residues 193–213 (PTFL…ILIF), 225–245 (GFIS…IEGL), and 266–286 (AQFI…FLRL).

This sequence belongs to the Lgt family.

The protein resides in the cell inner membrane. It carries out the reaction L-cysteinyl-[prolipoprotein] + a 1,2-diacyl-sn-glycero-3-phospho-(1'-sn-glycerol) = an S-1,2-diacyl-sn-glyceryl-L-cysteinyl-[prolipoprotein] + sn-glycerol 1-phosphate + H(+). The protein operates within protein modification; lipoprotein biosynthesis (diacylglyceryl transfer). In terms of biological role, catalyzes the transfer of the diacylglyceryl group from phosphatidylglycerol to the sulfhydryl group of the N-terminal cysteine of a prolipoprotein, the first step in the formation of mature lipoproteins. The protein is Phosphatidylglycerol--prolipoprotein diacylglyceryl transferase of Prochlorococcus marinus (strain MIT 9301).